Reading from the N-terminus, the 405-residue chain is Arginine biosynthesis bifunctional protein ArgJ, mitochondrial (405 aa).

Positions 174, 200, 211, and 300 each coordinate substrate. The Nucleophile role is filled by Thr211.

This sequence belongs to the ArgJ family. As to quaternary structure, heterodimer of an alpha and a beta chain. Post-translationally, the alpha and beta chains are autoproteolytically processed from a single precursor protein within the mitochondrion.

Its subcellular location is the mitochondrion matrix. It catalyses the reaction N(2)-acetyl-L-ornithine + L-glutamate = N-acetyl-L-glutamate + L-ornithine. The catalysed reaction is L-glutamate + acetyl-CoA = N-acetyl-L-glutamate + CoA + H(+). The protein operates within amino-acid biosynthesis; L-arginine biosynthesis; L-ornithine and N-acetyl-L-glutamate from L-glutamate and N(2)-acetyl-L-ornithine (cyclic): step 1/1. Its pathway is amino-acid biosynthesis; L-arginine biosynthesis; N(2)-acetyl-L-ornithine from L-glutamate: step 1/4. Catalyzes two activities which are involved in the cyclic version of arginine biosynthesis: the synthesis of acetylglutamate from glutamate and acetyl-CoA, and of ornithine by transacetylation between acetylornithine and glutamate. The chain is Arginine biosynthesis bifunctional protein ArgJ, mitochondrial from Candida tropicalis (strain ATCC MYA-3404 / T1) (Yeast).